We begin with the raw amino-acid sequence, 315 residues long: MSNNAVYAVPQVKTTKTSSKTTFHFTAGLFSGLTSSILLQPADLLKTRVQQSQNASLLPTVKAILSSPNPIRNLWRGTLPSALRTGFGSALYFTSLNALRTGLVQTNGIAPVTNSSSALPKLSNTANLATGAAARVAAGFVMMPVTVIKVRYESDYYAYRSLFGAGRDIVRTEGFRGLFSGFGATAARDAPYAGLYVLFYEQLKRRLAGLSSSSSDQQPLKSSSINFVSGGLAAGLATTITNPFDAVKTRLQLMPGRYGNMMRAVRLMVQEDGVRSLFGGLGLRITRKALSSALAWTVYEELILRAEVQWGSKGE.

Solcar repeat units follow at residues 19 to 102 (SKTT…LRTG), 125 to 206 (TANL…LKRR), and 221 to 305 (KSSS…LILR). 6 helical membrane passes run 25–50 (FTAGLFSGLTSSILLQPADLLKTRVQ), 77–103 (GTLPSALRTGFGSALYFTSLNALRTGL), 128–153 (LATGAAARVAAGFVMMPVTVIKVRYE), 181–204 (GFGATAARDAPYAGLYVLFYEQLK), 225–251 (INFVSGGLAAGLATTITNPFDAVKTRL), and 280–298 (GLGLRITRKALSSALAWTV).

It belongs to the mitochondrial carrier (TC 2.A.29) family. SLC25A38 subfamily.

It is found in the mitochondrion inner membrane. It catalyses the reaction glycine(in) = glycine(out). Mitochondrial glycine transporter that imports glycine into the mitochondrial matrix. Plays an important role in providing glycine for the first enzymatic step in heme biosynthesis, the condensation of glycine with succinyl-CoA to produce 5-aminolevulinate (ALA) in the mitochondrial matrix. This is Mitochondrial glycine transporter from Aspergillus niger (strain ATCC MYA-4892 / CBS 513.88 / FGSC A1513).